An 88-amino-acid polypeptide reads, in one-letter code: UPF0237 protein spr0217 (88 aa).

One can recognise an ACT domain in the interval 4–77 (IITVVGKDKS…QTLNVKINIQ (74 aa)).

Belongs to the UPF0237 family. In terms of assembly, homodimer.

In Streptococcus pneumoniae (strain ATCC BAA-255 / R6), this protein is UPF0237 protein spr0217.